We begin with the raw amino-acid sequence, 340 residues long: GTP 3',8-cyclase (340 aa).

The Radical SAM core domain maps to 20 to 246 (RFERQYVYLR…PKALSDGPAK (227 aa)). Arg29 serves as a coordination point for GTP. Residues Cys36 and Cys40 each coordinate [4Fe-4S] cluster. S-adenosyl-L-methionine is bound at residue Tyr42. [4Fe-4S] cluster is bound at residue Cys43. Residue Arg79 participates in GTP binding. Position 83 (Gly83) interacts with S-adenosyl-L-methionine. Thr110 is a binding site for GTP. Ser134 provides a ligand contact to S-adenosyl-L-methionine. Lys171 is a binding site for GTP. Met205 contacts S-adenosyl-L-methionine. Positions 268 and 271 each coordinate [4Fe-4S] cluster. 273–275 (RLR) is a binding site for GTP. Cys285 lines the [4Fe-4S] cluster pocket.

It belongs to the radical SAM superfamily. MoaA family. In terms of assembly, monomer and homodimer. The cofactor is [4Fe-4S] cluster.

The enzyme catalyses GTP + AH2 + S-adenosyl-L-methionine = (8S)-3',8-cyclo-7,8-dihydroguanosine 5'-triphosphate + 5'-deoxyadenosine + L-methionine + A + H(+). Its pathway is cofactor biosynthesis; molybdopterin biosynthesis. Its function is as follows. Catalyzes the cyclization of GTP to (8S)-3',8-cyclo-7,8-dihydroguanosine 5'-triphosphate. The sequence is that of GTP 3',8-cyclase from Actinobacillus pleuropneumoniae serotype 3 (strain JL03).